Consider the following 559-residue polypeptide: 2-isopropylmalate synthase (559 aa).

One can recognise a Pyruvate carboxyltransferase domain in the interval 33–307 (PIWCSSDLRD…DPQLDFSDID (275 aa)). Residues aspartate 42, histidine 246, histidine 248, and asparagine 282 each coordinate Mg(2+). The segment at 439–559 (ANTPYALVSH…SLSQQEAKAA (121 aa)) is regulatory domain.

This sequence belongs to the alpha-IPM synthase/homocitrate synthase family. LeuA type 2 subfamily. Homodimer. Requires Mg(2+) as cofactor.

The protein resides in the cytoplasm. The catalysed reaction is 3-methyl-2-oxobutanoate + acetyl-CoA + H2O = (2S)-2-isopropylmalate + CoA + H(+). It functions in the pathway amino-acid biosynthesis; L-leucine biosynthesis; L-leucine from 3-methyl-2-oxobutanoate: step 1/4. Catalyzes the condensation of the acetyl group of acetyl-CoA with 3-methyl-2-oxobutanoate (2-ketoisovalerate) to form 3-carboxy-3-hydroxy-4-methylpentanoate (2-isopropylmalate). The chain is 2-isopropylmalate synthase from Pseudomonas fluorescens (strain SBW25).